The chain runs to 349 residues: tRNA N6-adenosine threonylcarbamoyltransferase (349 aa).

Fe cation contacts are provided by His115 and His119. Substrate contacts are provided by residues 137–141 (LASGG), Asp170, Gly183, and Asn281. Asp309 provides a ligand contact to Fe cation.

Belongs to the KAE1 / TsaD family. Requires Fe(2+) as cofactor.

It is found in the cytoplasm. It catalyses the reaction L-threonylcarbamoyladenylate + adenosine(37) in tRNA = N(6)-L-threonylcarbamoyladenosine(37) in tRNA + AMP + H(+). Required for the formation of a threonylcarbamoyl group on adenosine at position 37 (t(6)A37) in tRNAs that read codons beginning with adenine. Is involved in the transfer of the threonylcarbamoyl moiety of threonylcarbamoyl-AMP (TC-AMP) to the N6 group of A37, together with TsaE and TsaB. TsaD likely plays a direct catalytic role in this reaction. The polypeptide is tRNA N6-adenosine threonylcarbamoyltransferase (Methylobacterium nodulans (strain LMG 21967 / CNCM I-2342 / ORS 2060)).